Here is a 111-residue protein sequence, read N- to C-terminus: P antigen family member 2 (111 aa).

The tract at residues 1–66 (MSELLRARSQ…NQAVPAFQGP (66 aa)) is disordered. The segment covering 8–24 (RSQSSERGNDQESSQPV) has biased composition (polar residues).

This sequence belongs to the GAGE family.

The protein is P antigen family member 2 (PAGE2) of Homo sapiens (Human).